The sequence spans 296 residues: Fructose-bisphosphate aldolase class 1 (296 aa).

The active-site Proton acceptor is glutamate 175. The active-site Schiff-base intermediate with dihydroxyacetone-P is the lysine 212.

The protein belongs to the class I fructose-bisphosphate aldolase family.

It catalyses the reaction beta-D-fructose 1,6-bisphosphate = D-glyceraldehyde 3-phosphate + dihydroxyacetone phosphate. Its pathway is carbohydrate degradation; glycolysis; D-glyceraldehyde 3-phosphate and glycerone phosphate from D-glucose: step 4/4. This is Fructose-bisphosphate aldolase class 1 from Staphylococcus aureus (strain MSSA476).